Reading from the N-terminus, the 106-residue chain is ATP-dependent Clp protease adapter protein ClpS (106 aa).

The span at 1–13 (MPRKTSHEHDHGL) shows a compositional bias: basic and acidic residues. The tract at residues 1-21 (MPRKTSHEHDHGLVVETSKPE) is disordered.

It belongs to the ClpS family. In terms of assembly, binds to the N-terminal domain of the chaperone ClpA.

Functionally, involved in the modulation of the specificity of the ClpAP-mediated ATP-dependent protein degradation. This chain is ATP-dependent Clp protease adapter protein ClpS, found in Xanthomonas campestris pv. campestris (strain 8004).